The chain runs to 255 residues: Hydroxyacylglutathione hydrolase (255 aa).

Positions 56, 58, 60, 61, 114, 133, and 171 each coordinate Zn(2+).

The protein belongs to the metallo-beta-lactamase superfamily. Glyoxalase II family. In terms of assembly, monomer. Zn(2+) is required as a cofactor.

The enzyme catalyses an S-(2-hydroxyacyl)glutathione + H2O = a 2-hydroxy carboxylate + glutathione + H(+). Its pathway is secondary metabolite metabolism; methylglyoxal degradation; (R)-lactate from methylglyoxal: step 2/2. Functionally, thiolesterase that catalyzes the hydrolysis of S-D-lactoyl-glutathione to form glutathione and D-lactic acid. This is Hydroxyacylglutathione hydrolase from Rhodopseudomonas palustris (strain BisB5).